Consider the following 97-residue polypeptide: Aspartyl/glutamyl-tRNA(Asn/Gln) amidotransferase subunit C (97 aa).

The protein belongs to the GatC family. In terms of assembly, heterotrimer of A, B and C subunits.

The catalysed reaction is L-glutamyl-tRNA(Gln) + L-glutamine + ATP + H2O = L-glutaminyl-tRNA(Gln) + L-glutamate + ADP + phosphate + H(+). The enzyme catalyses L-aspartyl-tRNA(Asn) + L-glutamine + ATP + H2O = L-asparaginyl-tRNA(Asn) + L-glutamate + ADP + phosphate + 2 H(+). Allows the formation of correctly charged Asn-tRNA(Asn) or Gln-tRNA(Gln) through the transamidation of misacylated Asp-tRNA(Asn) or Glu-tRNA(Gln) in organisms which lack either or both of asparaginyl-tRNA or glutaminyl-tRNA synthetases. The reaction takes place in the presence of glutamine and ATP through an activated phospho-Asp-tRNA(Asn) or phospho-Glu-tRNA(Gln). This is Aspartyl/glutamyl-tRNA(Asn/Gln) amidotransferase subunit C from Picosynechococcus sp. (strain ATCC 27264 / PCC 7002 / PR-6) (Agmenellum quadruplicatum).